A 209-amino-acid polypeptide reads, in one-letter code: GTP-binding nuclear protein Ran1A (209 aa).

The region spanning 1 to 162 is the Small GTPase Ran-type domain; sequence NFKLVIVGDG…LYLARKLAGD (162 aa). 9–16 provides a ligand contact to GTP; the sequence is DGGTGKTT. The interval 28 to 36 is switch-I; sequence KKYEPTIGV. GTP is bound by residues G59, 113-116, and 141-143; these read NKVD and SAK. Residues 59 to 75 form a switch-II region; it reads GQEKFGGLRDGYYIHGQ. Positions 187–196 are enriched in low complexity; the sequence is QHEAELAQAA. The disordered stretch occupies residues 187–209; that stretch reads QHEAELAQAASQPLPDDDDDAFD.

It belongs to the small GTPase superfamily. Ran family. In terms of assembly, found in a nuclear export complex with RanGTP, exportin and pre-miRNA.

The protein localises to the nucleus. Functionally, GTP-binding protein involved in nucleocytoplasmic transport. Required for the import of protein into the nucleus and also for RNA export. Involved in chromatin condensation and control of cell cycle. In Lotus japonicus (Lotus corniculatus var. japonicus), this protein is GTP-binding nuclear protein Ran1A (RAN1A).